We begin with the raw amino-acid sequence, 82 residues long: MKMESSKMLVVFTLMVLIAVSSDLVSGNFASGEASSQLCFNPCTPQLGNNECNTICMNKKYKEGSCVGFGIPPTSKYCCCKT.

The signal sequence occupies residues 1–27 (MKMESSKMLVVFTLMVLIAVSSDLVSG). Intrachain disulfides connect C39-C80, C43-C66, C52-C78, and C56-C79.

It belongs to the DEFL family.

The protein localises to the secreted. This is Putative defensin-like protein 70 (LCR83) from Arabidopsis thaliana (Mouse-ear cress).